The primary structure comprises 106 residues: Thiosulfate sulfurtransferase GlpE (106 aa).

Residues 16 to 104 enclose the Rhodanese domain; sequence REQGAVLVDV…WRATYPDETV (89 aa). C64 (cysteine persulfide intermediate) is an active-site residue.

It belongs to the GlpE family.

It localises to the cytoplasm. The enzyme catalyses thiosulfate + hydrogen cyanide = thiocyanate + sulfite + 2 H(+). It catalyses the reaction thiosulfate + [thioredoxin]-dithiol = [thioredoxin]-disulfide + hydrogen sulfide + sulfite + 2 H(+). In terms of biological role, transferase that catalyzes the transfer of sulfur from thiosulfate to thiophilic acceptors such as cyanide or dithiols. May function in a CysM-independent thiosulfate assimilation pathway by catalyzing the conversion of thiosulfate to sulfite, which can then be used for L-cysteine biosynthesis. This Pseudomonas savastanoi pv. phaseolicola (strain 1448A / Race 6) (Pseudomonas syringae pv. phaseolicola (strain 1448A / Race 6)) protein is Thiosulfate sulfurtransferase GlpE.